Reading from the N-terminus, the 125-residue chain is Histone H2A (125 aa).

Basic residues predominate over residues 1 to 18 (MSGRGKGGKVKGKSKTRS). Residues 1–23 (MSGRGKGGKVKGKSKTRSSRAGL) form a disordered region. Ser2 is subject to N-acetylserine. Gln104 bears the N5-methylglutamine mark.

This sequence belongs to the histone H2A family. In terms of assembly, the nucleosome is a histone octamer containing two molecules each of H2A, H2B, H3 and H4 assembled in one H3-H4 heterotetramer and two H2A-H2B heterodimers. The octamer wraps approximately 147 bp of DNA.

It is found in the nucleus. It localises to the chromosome. Core component of nucleosome. Nucleosomes wrap and compact DNA into chromatin, limiting DNA accessibility to the cellular machineries which require DNA as a template. Histones thereby play a central role in transcription regulation, DNA repair, DNA replication and chromosomal stability. DNA accessibility is regulated via a complex set of post-translational modifications of histones, also called histone code, and nucleosome remodeling. This chain is Histone H2A, found in Sepia officinalis (Common cuttlefish).